A 252-amino-acid polypeptide reads, in one-letter code: NDR1/HIN1-like protein 6 (252 aa).

Positions M1–P46 are disordered. The helical transmembrane segment at F70 to V90 threads the bilayer. N121, N154, N166, and N180 each carry an N-linked (GlcNAc...) asparagine glycan.

As to quaternary structure, homodimer. As to expression, highly expressed in seeds and at lower level in roots and senescing leaves. Expressed in leaves and flowers.

The protein localises to the cell membrane. It localises to the cytoplasm. It is found in the cytosol. Functionally, plays an important role in the abiotic stresses-induced abscisic acid (ABA) signaling and biosynthesis. Acts as a positive regulator of ABA-mediated seed germination inhibition. Functions downstream of ABF2/AREB1, ABF4/AREB2 and ABF3. This is NDR1/HIN1-like protein 6 from Arabidopsis thaliana (Mouse-ear cress).